A 62-amino-acid chain; its full sequence is Phylloseptin-Az7 (62 aa).

The first 19 residues, 1–19, serve as a signal peptide directing secretion; it reads LKKSLFLVLFLGLVSLSIC. The propeptide occupies 20-40; it reads EEEKRETEEKENEQEDDKSEE. F61 is modified (phenylalanine amide).

It belongs to the frog skin active peptide (FSAP) family. Phylloseptin subfamily. In terms of tissue distribution, expressed by the skin glands.

Its subcellular location is the secreted. Has antimicrobial activity. This Pithecopus azureus (Orange-legged monkey tree frog) protein is Phylloseptin-Az7 (psn15).